Here is a 692-residue protein sequence, read N- to C-terminus: DNA-binding protein RFX2 (692 aa).

A disordered region spans residues 1 to 26; sequence MQNSEGGADSPATVALRPAAQPVPAS. Residue serine 26 is modified to Phosphoserine. Positions 169-244 form a DNA-binding region, RFX-type winged-helix; sequence TLQWLLDNYE…YHYYGIRLKP (76 aa). The disordered stretch occupies residues 261–296; sequence RQQPTHQKPRYRPAQKSDSLGDGSAHSNMHSTPEQA. Positions 285–294 are enriched in polar residues; the sequence is AHSNMHSTPE. Position 386 is a phosphoserine (serine 386). Positions 660-685 are enriched in basic and acidic residues; that stretch reads DGHSSEADVDGRSLGEPLVKRERSDP. Residues 660–692 are disordered; the sequence is DGHSSEADVDGRSLGEPLVKRERSDPSHPLQGI.

It belongs to the RFX family. Homodimer; probably only forms homodimers in testis. Heterodimer; heterodimerizes with RFX1 and RFX3. In terms of tissue distribution, expressed at highest level in testis. Expressed at lower level in thymus. Also expressed in stomach, kidney, liver, brain and heart. Weakly expressed in spleen and lung. Within testis, most abundantly present in spermatocytes: present from pachytene spermatocytes to early spermatids (at protein level). Also present in non-germinal tissues.

The protein localises to the nucleus. It is found in the cytoplasm. Its function is as follows. Transcription factor that acts as a key regulator of spermatogenesis. Acts by regulating expression of genes required for the haploid phase during spermiogenesis, such as genes required for cilium assembly and function. Recognizes and binds the X-box, a regulatory motif with DNA sequence 5'-GTNRCC(0-3N)RGYAAC-3' present on promoters. Probably activates transcription of the testis-specific histone gene H1-6. In Rattus norvegicus (Rat), this protein is DNA-binding protein RFX2 (Rfx2).